Reading from the N-terminus, the 498-residue chain is NADPH:adrenodoxin oxidoreductase, mitochondrial (498 aa).

The N-terminal 37 residues, 1–37 (MSTHKAALCKVQILKLFLISARCVRITRFYGVCGLST), are a transit peptide targeting the mitochondrion. FAD-binding residues include A54, E75, L83, and V119. NADP(+) is bound by residues 190–193 (QGNV), 234–235 (RR), and E246. FAD-binding positions include W404 and 411-413 (GVI). G411 provides a ligand contact to NADP(+). A compositionally biased stretch (basic and acidic residues) spans 469–488 (DSEETRRGETRGKPREKMLD). A disordered region spans residues 469–489 (DSEETRRGETRGKPREKMLDV).

It belongs to the ferredoxin--NADP reductase type 1 family. FAD is required as a cofactor.

It is found in the mitochondrion inner membrane. The catalysed reaction is 2 reduced [adrenodoxin] + NADP(+) + H(+) = 2 oxidized [adrenodoxin] + NADPH. The protein operates within steroid metabolism; cholesterol metabolism. Serves as the first electron transfer protein in all the mitochondrial P450 systems including cholesterol side chain cleavage in all steroidogenic tissues, steroid 11-beta hydroxylation in the adrenal cortex, 25-OH-vitamin D3-24 hydroxylation in the kidney, and sterol C-27 hydroxylation in the liver. The polypeptide is NADPH:adrenodoxin oxidoreductase, mitochondrial (fdxr) (Salvelinus fontinalis (Brook trout)).